Here is a 437-residue protein sequence, read N- to C-terminus: MAVSKVYARSVYDSRGNPTVEVELTTEKGVFRSIVPSGASTGVHEALEMRDEDKSKWMGKGVMNAVNNVNNVIAAAFVKANLDVKDQKAVDDFLLSLDGTANKSKLGANAILGVSMAAARAAAAEKNVPLYQHLADLSKSKTSPYVLPVPFLNVLNGGSHAGGALALQEFMIAPTGAKTFAEAMRIGSEVYHNLKSLTKKRYGASAGNVGDEGGVAPNIQTAEEALDLIVDAIKAAGHDGKVKIGLDCASSEFFKDGKYDLDFKNPESDKSKWLTGVELADMYHSLMKRYPIVSIEDPFAEDDWEAWSHFFKTAGIQIVADDLTVTNPARIATAIEKKAADALLLKVNQIGTLSESIKAAQDSFAANWGVMVSHRSGETEDTFIADLVVGLRTGQIKTGAPARSERLAKLNQLLRIEEELGDKAVYAGENFHHGDKL.

Residue lysine 60 forms a Glycyl lysine isopeptide (Lys-Gly) (interchain with G-Cter in ubiquitin) linkage. Serine 138 carries the phosphoserine modification. Histidine 160 is a catalytic residue. Serine 188 carries the phosphoserine modification. Lysine 243 participates in a covalent cross-link: Glycyl lysine isopeptide (Lys-Gly) (interchain with G-Cter in ubiquitin). Residues aspartate 247 and glutamate 296 each coordinate Mg(2+). Threonine 313 bears the Phosphothreonine mark. Aspartate 321 contributes to the Mg(2+) binding site. At threonine 324 the chain carries Phosphothreonine. Lysine 358 is covalently cross-linked (Glycyl lysine isopeptide (Lys-Gly) (interchain with G-Cter in ubiquitin)).

This sequence belongs to the enolase family. As to quaternary structure, homodimer. Requires Mg(2+) as cofactor.

The protein resides in the cytoplasm. It catalyses the reaction (2R)-2-phosphoglycerate = phosphoenolpyruvate + H2O. The protein operates within carbohydrate degradation; glycolysis; pyruvate from D-glyceraldehyde 3-phosphate: step 4/5. In Saccharomyces cerevisiae (strain ATCC 204508 / S288c) (Baker's yeast), this protein is Enolase 2 (ENO2).